Consider the following 807-residue polypeptide: Maternal DNA replication licensing factor mcm3 (807 aa).

The region spanning 295–502 (IFEHLSKSLA…NDQEIADHVL (208 aa)) is the MCM domain. 345–352 (GDPSVAKS) lines the ATP pocket. Residues 477–480 (SRFD) carry the Arginine finger motif. Residues 664–673 (KTDKDLHDEN) show a composition bias toward basic and acidic residues. A disordered region spans residues 664 to 741 (KTDKDLHDEN…QDGKRSLSQN (78 aa)). A compositionally biased stretch (polar residues) spans 707 to 723 (FSEQDSSLNENLSQSLR). Residues 727–741 (KKAESQDGKRSLSQN) show a composition bias toward basic and acidic residues.

The protein belongs to the MCM family. Component of the mcm2-7 complex (RLF-M). The complex forms a toroidal hexameric ring with the proposed subunit order mcm2-mcm6-mcm4-mcm7-mcm3-mcm5. The heterodimer of mmcm3/mcm5 interacts with mcm4, mmcm6, mcm7 and weakly with mcm2. Interacts with mcm7, though this interaction may not be direct, and remains in a complex with mcm7 throughout the cell cycle. Component of the CMG helicase complex, composed of the mcm2-7 complex, the GINS complex and cdc45.

The protein localises to the nucleus. It is found in the chromosome. The enzyme catalyses ATP + H2O = ADP + phosphate + H(+). Acts as a component of the mcm2-7 complex (mcm complex) which is the putative replicative helicase essential for 'once per cell cycle' DNA replication initiation and elongation in eukaryotic cells. The active ATPase sites in the mcm2-7 ring are formed through the interaction surfaces of two neighboring subunits such that a critical structure of a conserved arginine finger motif is provided in trans relative to the ATP-binding site of the Walker A box of the adjacent subunit. The six ATPase active sites, however, are likely to contribute differentially to the complex helicase activity. The existence of maternal and zygotic forms of mcm3 and mcm6 suggests that specific forms of mcm2-7 complexes may be used during different stages of development. This Xenopus laevis (African clawed frog) protein is Maternal DNA replication licensing factor mcm3 (mmcm3).